The following is a 717-amino-acid chain: Catalase-peroxidase (717 aa).

The signal sequence occupies residues 1–12 (MTSKGMCPVAHG). A cross-link (tryptophyl-tyrosyl-methioninium (Trp-Tyr) (with M-247)) is located at residues 93–221 (WHSAGSYRIA…LAAVMMGLIY (129 aa)). The Proton acceptor role is filled by H94. A cross-link (tryptophyl-tyrosyl-methioninium (Tyr-Met) (with W-93)) is located at residues 221-247 (YVNPEGVDGKPDPLKTAQDMRVTFARM). H262 provides a ligand contact to heme b.

The protein belongs to the peroxidase family. Peroxidase/catalase subfamily. In terms of assembly, homodimer or homotetramer. It depends on heme b as a cofactor. Formation of the three residue Trp-Tyr-Met cross-link is important for the catalase, but not the peroxidase activity of the enzyme.

It catalyses the reaction H2O2 + AH2 = A + 2 H2O. It carries out the reaction 2 H2O2 = O2 + 2 H2O. Bifunctional enzyme with both catalase and broad-spectrum peroxidase activity. This Polynucleobacter asymbioticus (strain DSM 18221 / CIP 109841 / QLW-P1DMWA-1) (Polynucleobacter necessarius subsp. asymbioticus) protein is Catalase-peroxidase.